The chain runs to 366 residues: MSADGLVSAAASAEEQAFEAGLRPRTLTEFVGQRKVREQLSIMLEGAQARGRPPDHVLLSGPPGLGKTSLAMIIAEELAVPLRMTSGPAIERAGDLVAILTALSPGEVLFLDEIHRIARPAEELLYAAMEDFRVDVILGKGPGATAIPLDVAPFTLVGATTRSGLLTGPLRDRFGFTAHLDFYAPDELARVLTRSAGLLGVSLTEDGAAEVAGRSRGTPRIANRLLRRVRDYAEVRADGVVTRDVARAALRIYDVDGLGLDRLDRAVLEALVGRFGGGPVGLTTLAVSVGEEPETVEDVAEPFLLRAGLLIRTSRGRIATPAAFEHLGLEPVADPLGRSQAPLFSNTGLLAEGGLLPEDGLHPGGG.

Positions 3 to 183 (ADGLVSAAAS…FGFTAHLDFY (181 aa)) are large ATPase domain (RuvB-L). ATP is bound by residues L22, R23, G64, K67, T68, S69, 130 to 132 (EDF), R173, Y183, and R220. Residue T68 coordinates Mg(2+). Residues 184-254 (APDELARVLT…VARAALRIYD (71 aa)) form a small ATPAse domain (RuvB-S) region. The tract at residues 257-366 (GLGLDRLDRA…PEDGLHPGGG (110 aa)) is head domain (RuvB-H). R312 and R317 together coordinate DNA.

Belongs to the RuvB family. Homohexamer. Forms an RuvA(8)-RuvB(12)-Holliday junction (HJ) complex. HJ DNA is sandwiched between 2 RuvA tetramers; dsDNA enters through RuvA and exits via RuvB. An RuvB hexamer assembles on each DNA strand where it exits the tetramer. Each RuvB hexamer is contacted by two RuvA subunits (via domain III) on 2 adjacent RuvB subunits; this complex drives branch migration. In the full resolvosome a probable DNA-RuvA(4)-RuvB(12)-RuvC(2) complex forms which resolves the HJ.

Its subcellular location is the cytoplasm. The catalysed reaction is ATP + H2O = ADP + phosphate + H(+). The RuvA-RuvB-RuvC complex processes Holliday junction (HJ) DNA during genetic recombination and DNA repair, while the RuvA-RuvB complex plays an important role in the rescue of blocked DNA replication forks via replication fork reversal (RFR). RuvA specifically binds to HJ cruciform DNA, conferring on it an open structure. The RuvB hexamer acts as an ATP-dependent pump, pulling dsDNA into and through the RuvAB complex. RuvB forms 2 homohexamers on either side of HJ DNA bound by 1 or 2 RuvA tetramers; 4 subunits per hexamer contact DNA at a time. Coordinated motions by a converter formed by DNA-disengaged RuvB subunits stimulates ATP hydrolysis and nucleotide exchange. Immobilization of the converter enables RuvB to convert the ATP-contained energy into a lever motion, pulling 2 nucleotides of DNA out of the RuvA tetramer per ATP hydrolyzed, thus driving DNA branch migration. The RuvB motors rotate together with the DNA substrate, which together with the progressing nucleotide cycle form the mechanistic basis for DNA recombination by continuous HJ branch migration. Branch migration allows RuvC to scan DNA until it finds its consensus sequence, where it cleaves and resolves cruciform DNA. This chain is Holliday junction branch migration complex subunit RuvB, found in Frankia alni (strain DSM 45986 / CECT 9034 / ACN14a).